A 281-amino-acid polypeptide reads, in one-letter code: Urease accessory protein UreD 2 (281 aa).

It belongs to the UreD family. As to quaternary structure, ureD, UreF and UreG form a complex that acts as a GTP-hydrolysis-dependent molecular chaperone, activating the urease apoprotein by helping to assemble the nickel containing metallocenter of UreC. The UreE protein probably delivers the nickel.

Its subcellular location is the cytoplasm. Its function is as follows. Required for maturation of urease via the functional incorporation of the urease nickel metallocenter. In Pseudomonas syringae pv. syringae (strain B728a), this protein is Urease accessory protein UreD 2.